The sequence spans 180 residues: E3 ubiquitin-protein ligase RNF5 (180 aa).

Position 2 is an N-acetylalanine (Ala-2). The RING-type zinc-finger motif lies at 27–68 (CNICLETAREAVVSVCGHLYCWPCLHQWLETRPERQECPVCK). The segment at 79 to 110 (LYGRGSQKPQDPRLKTPPRPQGQRPAPESRGG) is disordered. Residue Ser-84 is modified to Phosphoserine. Thr-94 bears the Phosphothreonine mark. Residue Ser-107 is modified to Phosphoserine. 2 helical membrane-spanning segments follow: residues 118–138 (GGFH…TTVF) and 160–180 (SWQD…LLSI).

It belongs to the RNF5 family. As to quaternary structure, interacts with PXN. Interacts with Salmonella typhimurium sopA. Interacts with JKAMP. Interacts with STING1; the interaction of endogenous proteins is dependent on viral infection. In terms of tissue distribution, widely expressed.

It is found in the cell membrane. The protein localises to the mitochondrion membrane. It localises to the endoplasmic reticulum membrane. The enzyme catalyses S-ubiquitinyl-[E2 ubiquitin-conjugating enzyme]-L-cysteine + [acceptor protein]-L-lysine = [E2 ubiquitin-conjugating enzyme]-L-cysteine + N(6)-ubiquitinyl-[acceptor protein]-L-lysine.. Its pathway is protein modification; protein ubiquitination. Membrane-bound E3 ubiquitin-protein ligase that mediates ubiquitination of target proteins. May function together with E2 ubiquitin-conjugating enzymes UBE2D1/UBCH5A and UBE2D2/UBC4. Mediates ubiquitination of PXN/paxillin,thereby regulating cell motility and localization of PXN/paxillin. Catalyzes ubiquitination of Salmonella type III secreted protein sopA. Mediates the 'Lys-63'-linked polyubiquitination of JKAMP thereby regulating JKAMP function by decreasing its association with components of the proteasome and ERAD; the ubiquitination appears to involve E2 ubiquitin-conjugating enzyme UBE2N. Mediates the 'Lys-48'-linked polyubiquitination of STING1 at 'Lys-150' leading to its proteasomal degradation; the ubiquitination occurs in mitochondria after viral transfection and regulates antiviral responses. Catalyzes ubiquitination and subsequent degradation of ATG4B, thereby inhibiting autophagy. The polypeptide is E3 ubiquitin-protein ligase RNF5 (Homo sapiens (Human)).